We begin with the raw amino-acid sequence, 418 residues long: Putative O-antigen transporter (418 aa).

Transmembrane regions (helical) follow at residues 8-28 (VWNL…LGFL), 37-57 (FGVY…DVGL), 85-105 (FLVL…DGIV), 124-144 (LLAI…ILEG), 165-185 (IPAI…GLIF), 217-237 (LFFF…MVYF), 251-271 (VAFY…PAAI), 297-317 (LLMF…SGLV), 334-354 (LNVL…FSAI), 362-382 (ITAL…YFMV), and 385-405 (YGLL…ALLL).

The protein belongs to the polysaccharide synthase family.

Its subcellular location is the cell inner membrane. It participates in bacterial outer membrane biogenesis; lipopolysaccharide biosynthesis. In terms of biological role, could be an O-antigen transporter. This chain is Putative O-antigen transporter (rfbE), found in Shigella flexneri.